Reading from the N-terminus, the 588-residue chain is Calicin (588 aa).

A BTB domain is found at 12–124; sequence SFVLQNLNRQ…RLRVHCNDFL (113 aa). Residues 133–235 form the BACK domain; sequence CLRYLFLAEL…NAVSNKTLVF (103 aa). Phosphoserine is present on Ser149. Kelch repeat units lie at residues 280-327, 328-375, 377-423, 425-475, 476-525, and 526-580; these read SVVI…SAGR, YIYI…TCGG, VYSV…TKGD, HLYI…SFQQ, DNIL…IGDS, and KVFV…LAKL.

As to quaternary structure, interacts with CYLC1; the interaction may be relevant for proper acrosome attachment to the nuclear envelope. In terms of tissue distribution, expressed in testis, in spermatozoa (at protein level).

The protein localises to the cytoplasm. It is found in the cytoskeleton. It localises to the perinuclear theca. Its subcellular location is the calyx. Required for both nuclear and acrosomal shaping during spermiogenesis. The chain is Calicin (CCIN) from Homo sapiens (Human).